The following is a 1047-amino-acid chain: [F-actin]-monooxygenase MICAL1 (1047 aa).

The interval 1–489 (MASPTSTNPA…QDLYDIMDKE (489 aa)) is monooxygenase domain. Residues C95, 114 to 116 (EKR), 121 to 123 (RHN), F181, Y293, and D393 contribute to the FAD site. T475 carries the phosphothreonine modification. One can recognise a Calponin-homology (CH) domain in the interval 507–611 (SAGTEELLHW…YLSHFHSAFK (105 aa)). Residue S616 is modified to Phosphoserine. The tract at residues 644–672 (RTKVEEETPCTEEPPVSEPSVPPALPSEH) is disordered. Over residues 659–668 (VSEPSVPPAL) the composition is skewed to pro residues. An LIM zinc-binding domain is found at 679–741 (DVCELCGKRL…LQHLPQEDQK (63 aa)). Residues C681, C684, H702, C705, C708, C711, C731, and H734 each contribute to the Zn(2+) site. Disordered regions lie at residues 739–787 (DQKE…QPAR) and 849–872 (EKGEEEEEEEEEEEEEEEELPPPL). The span at 745-767 (NNGSPENQELPTPGDSTTQSGPS) shows a compositional bias: polar residues. S777 and S781 each carry phosphoserine. Over residues 851–868 (GEEEEEEEEEEEEEEEEL) the composition is skewed to acidic residues. In terms of domain architecture, bMERB spans 905–1047 (KEEEMKRFCK…EERRLREMPV (143 aa)). The stretch at 912–996 (FCKAQAIQRR…LEEKQRQLDH (85 aa)) forms a coiled coil.

This sequence belongs to the Mical family. Interacts with STK38 and STK38L. Associates with the SH3 domain of NEDD9. Interacts with VIM and PLXNA3. Interacts with RAB1B, RAB8A, RAB10, RAB13 and RAB15 (in their GTP-bound forms); binding to RAB1B is of low affinity compared to other Rab proteins; at least in case of RAB8A and RAB10 can bind 2 molecules of the Rab proteins simultaneously. Interacts with GRAF1/ARHGAP26, GRAF2/ARHGAP10, RAB8A, RAB8B and RAB10; may bind simultaneously to GRAFs and Rabs and connects GRAFs to Rabs. Does not interact with RAB1 and RAB11A. FAD serves as cofactor.

The protein resides in the cytoplasm. Its subcellular location is the cytoskeleton. The protein localises to the endosome membrane. It localises to the midbody. It carries out the reaction L-methionyl-[F-actin] + NADPH + O2 + H(+) = L-methionyl-(R)-S-oxide-[F-actin] + NADP(+) + H2O. It catalyses the reaction NADPH + O2 + H(+) = H2O2 + NADP(+). In terms of biological role, monooxygenase that promotes depolymerization of F-actin by mediating oxidation of specific methionine residues on actin to form methionine-sulfoxide, resulting in actin filament disassembly and preventing repolymerization. In the absence of actin, it also functions as a NADPH oxidase producing H(2)O(2). Acts as a cytoskeletal regulator that connects NEDD9 to intermediate filaments. Also acts as a negative regulator of apoptosis via its interaction with STK38 and STK38L; acts by antagonizing STK38 and STK38L activation by MST1/STK4. Involved in regulation of lamina-specific connectivity in the nervous system such as the development of lamina-restricted hippocampal connections. Through redox regulation of the actin cytoskeleton controls the intracellular distribution of secretory vesicles containing L1/neurofascin/NgCAM family proteins in neurons, thereby regulating their cell surface levels. May act as Rab effector protein and play a role in vesicle trafficking. Promotes endosomal tubule extension by associating with RAB8 (RAB8A or RAB8B), RAB10 and GRAF (GRAF1/ARHGAP26 or GRAF2/ARHGAP10) on the endosomal membrane which may connect GRAFs to Rabs, thereby participating in neosynthesized Rab8-Rab10-Rab11-dependent protein export. This is [F-actin]-monooxygenase MICAL1 (Mical1) from Rattus norvegicus (Rat).